A 690-amino-acid chain; its full sequence is SWI/SNF-related matrix-associated actin-dependent regulator of chromatin subfamily A-like protein 1 homolog (690 aa).

A disordered region spans residues 30 to 49 (MQAAANATASTSSAAPPAPP). Over residues 31–44 (QAAANATASTSSAA) the composition is skewed to low complexity. Residues 92 to 170 (PTSLIKPTIG…AVKVELEPLP (79 aa)) form the HARP domain. The 159-residue stretch at 209-367 (IFALERDGRI…FTQIRLIDHK (159 aa)) folds into the Helicase ATP-binding domain. 222–229 (DEMGLGKS) contacts ATP. Positions 316-319 (DESH) match the DESH box motif. The short motif at 411–428 (RRLKADVLKDLPEKRREV) is the Nuclear localization signal element. Residues 482-639 (ILENYFYPDA…TFRTADKMHL (158 aa)) enclose the Helicase C-terminal domain.

It belongs to the SNF2/RAD54 helicase family. SMARCAL1 subfamily.

It is found in the nucleus. It catalyses the reaction ATP + H2O = ADP + phosphate + H(+). In terms of biological role, ATP-dependent annealing helicase that catalyzes the rewinding of the stably unwound DNA. This Caenorhabditis elegans protein is SWI/SNF-related matrix-associated actin-dependent regulator of chromatin subfamily A-like protein 1 homolog.